A 355-amino-acid polypeptide reads, in one-letter code: Alpha-N-acetylneuraminide alpha-2,8-sialyltransferase (355 aa).

Residues 1–28 are Cytoplasmic-facing; that stretch reads MSPCGRALHTSRGAMAMLARKFPRTRLP. Residues 29–47 traverse the membrane as a helical; Signal-anchor for type II membrane protein segment; sequence VGASALCVVVLCWLYIFPV. At 48-355 the chain is on the lumenal side; the sequence is YRLPNEKEIV…CEEPSPQPTS (308 aa). N-linked (GlcNAc...) asparagine glycosylation is found at N70 and N118. Disulfide bonds link C137–C286 and C151–C346. Positions 142 and 165 each coordinate CMP-N-acetyl-beta-neuraminate. N-linked (GlcNAc...) asparagine glycans are attached at residues N213 and N244. The CMP-N-acetyl-beta-neuraminate site is built by S273, T274, G275, W295, and H309. The active-site Proton donor/acceptor is the H321.

It belongs to the glycosyltransferase 29 family.

Its subcellular location is the golgi apparatus membrane. The catalysed reaction is an N-acetyl-alpha-neuraminyl-(2-&gt;3)-beta-D-galactosyl derivative + CMP-N-acetyl-beta-neuraminate = an N-acetyl-alpha-neuraminyl-(2-&gt;8)-N-acetyl-alpha-neuraminyl-(2-&gt;3)-beta-D-galactosyl derivative + CMP + H(+). The enzyme catalyses a ganglioside GM3 (d18:1(4E)) + CMP-N-acetyl-beta-neuraminate = a ganglioside GD3 (d18:1(4E)) + CMP + H(+). It carries out the reaction a ganglioside GD3 (d18:1(4E)) + CMP-N-acetyl-beta-neuraminate = a ganglioside GT3 (d18:1(4E)) + CMP + H(+). It catalyses the reaction a ganglioside GD1a (d18:1(4E)) + CMP-N-acetyl-beta-neuraminate = a ganglioside GT1a (d18:1(4E)) + CMP + H(+). The catalysed reaction is a ganglioside GT1b (d18:1(4E)) + CMP-N-acetyl-beta-neuraminate = a ganglioside GQ1b (d18:1(4E)) + CMP + H(+). The enzyme catalyses a ganglioside GM1b (d18:1(4E)) + CMP-N-acetyl-beta-neuraminate = a ganglioside GD1c (d18:1(4E)) + CMP + H(+). It carries out the reaction a ganglioside GD3 + CMP-N-acetyl-beta-neuraminate = a ganglioside GT3 + CMP + H(+). It catalyses the reaction [alpha-N-acetylneuraminyl-(2-&gt;8)](n)-alpha-N-acetylneuraminyl-(2-&gt;8)-alpha-N-acetylneuraminyl-(2-&gt;3)-beta-D-galactosyl-(1-&gt;4)-beta-D-glucosyl-(1&lt;-&gt;1)-ceramide + CMP-N-acetyl-beta-neuraminate = [alpha-N-acetylneuraminyl-(2-&gt;8)](n+1)-alpha-N-acetylneuraminyl-(2-&gt;8)-alpha-N-acetylneuraminyl-(2-&gt;3)-beta-D-galactosyl-(1-&gt;4)-beta-D-glucosyl-(1&lt;-&gt;1)-ceramide + CMP + H(+). It functions in the pathway protein modification; protein glycosylation. Its pathway is lipid metabolism; sphingolipid metabolism. Catalyzes the addition of sialic acid in alpha 2,8-linkage to the sialic acid moiety of the ganglioside GM3 to form ganglioside GD3; gangliosides are a subfamily of complex glycosphingolipds that contain one or more residues of sialic acid. Can catalyze the addition of a second alpha-2,8- sialic acid to GD3 to form GT3. Can use GM1b, GD1a and GT1b as acceptor substrates to synthesize GD1c, GT1a and GQ1b respectively. The protein is Alpha-N-acetylneuraminide alpha-2,8-sialyltransferase of Mus musculus (Mouse).